The chain runs to 141 residues: uncharacterized protein (141 aa).

This is an uncharacterized protein from Borreliella burgdorferi (strain ATCC 35210 / DSM 4680 / CIP 102532 / B31) (Borrelia burgdorferi).